The primary structure comprises 131 residues: Modulator protein MzrA (131 aa).

Over 1–14 (MSIRWLFPKLTPRK) the chain is Cytoplasmic. A helical transmembrane segment spans residues 15-31 (VARILILLALPIIALTQ). Over 32 to 131 (SQSLRHSQDD…KLTQKQSKLG (100 aa)) the chain is Periplasmic.

The protein belongs to the MzrA family. Interacts with EnvZ.

The protein resides in the cell inner membrane. Modulates the activity of the EnvZ/OmpR two-component regulatory system, probably by directly modulating EnvZ enzymatic activity and increasing stability of phosphorylated OmpR. This is Modulator protein MzrA from Pectobacterium carotovorum subsp. carotovorum (strain PC1).